A 273-amino-acid chain; its full sequence is Putative phosphoenolpyruvate synthase regulatory protein (273 aa).

153–160 (AVSRAGKT) lines the ADP pocket.

This sequence belongs to the pyruvate, phosphate/water dikinase regulatory protein family. PSRP subfamily.

It catalyses the reaction [pyruvate, water dikinase] + ADP = [pyruvate, water dikinase]-phosphate + AMP + H(+). It carries out the reaction [pyruvate, water dikinase]-phosphate + phosphate + H(+) = [pyruvate, water dikinase] + diphosphate. Bifunctional serine/threonine kinase and phosphorylase involved in the regulation of the phosphoenolpyruvate synthase (PEPS) by catalyzing its phosphorylation/dephosphorylation. The protein is Putative phosphoenolpyruvate synthase regulatory protein of Stenotrophomonas maltophilia (strain K279a).